We begin with the raw amino-acid sequence, 388 residues long: Cell adhesion molecule 4 (388 aa).

The N-terminal stretch at 1-20 (MGRARRFQWPLLLLWAAAAG) is a signal peptide. One can recognise an Ig-like V-type domain in the interval 21–119 (PGTGQEVQTE…DTHHQIATLT (99 aa)). The Extracellular segment spans residues 25–324 (QEVQTENVTV…VEAQTSVPYA (300 aa)). Residues asparagine 31 and asparagine 67 are each glycosylated (N-linked (GlcNAc...) asparagine). Cystine bridges form between cysteine 44–cysteine 104, cysteine 145–cysteine 199, and cysteine 245–cysteine 291. Ig-like C2-type domains follow at residues 124 to 219 (PENP…YVLD) and 224 to 307 (PTAR…YVLV). Asparagine 286 carries an N-linked (GlcNAc...) asparagine glycan. Residues 325–345 (IVGGILALLVFLIICVLVGMV) traverse the membrane as a helical segment. Topologically, residues 346-388 (WCSVRQKGSYLTHEASGLDEQGEAREAFLNGGDGHKRKEEFFI) are cytoplasmic. The residue at position 361 (serine 361) is a Phosphoserine.

It belongs to the nectin family. Monomer and homodimer. Post-translationally, N-glycosylated. In terms of tissue distribution, expressed in the brain and several organs including the kidney and liver.

Its subcellular location is the membrane. Involved in the cell-cell adhesion. Has calcium- and magnesium-independent cell-cell adhesion activity. May have tumor-suppressor activity. The sequence is that of Cell adhesion molecule 4 (Cadm4) from Mus musculus (Mouse).